We begin with the raw amino-acid sequence, 365 residues long: Aminomethyltransferase (365 aa).

This sequence belongs to the GcvT family. The glycine cleavage system is composed of four proteins: P, T, L and H.

The enzyme catalyses N(6)-[(R)-S(8)-aminomethyldihydrolipoyl]-L-lysyl-[protein] + (6S)-5,6,7,8-tetrahydrofolate = N(6)-[(R)-dihydrolipoyl]-L-lysyl-[protein] + (6R)-5,10-methylene-5,6,7,8-tetrahydrofolate + NH4(+). Functionally, the glycine cleavage system catalyzes the degradation of glycine. The polypeptide is Aminomethyltransferase (Desulfitobacterium hafniense (strain Y51)).